The following is a 165-amino-acid chain: Large ribosomal subunit protein uL5 (165 aa).

This sequence belongs to the universal ribosomal protein uL5 family. As to quaternary structure, part of the 50S ribosomal subunit; contacts the 5S rRNA and probably tRNA. Forms a bridge to the 30S subunit in the 70S ribosome.

This is one of the proteins that bind and probably mediate the attachment of the 5S RNA into the large ribosomal subunit, where it forms part of the central protuberance. In the 70S ribosome it contacts protein S13 of the 30S subunit (bridge B1b), connecting the 2 subunits; this bridge is implicated in subunit movement. May contact the P site tRNA; the 5S rRNA and some of its associated proteins might help stabilize positioning of ribosome-bound tRNAs. This Methanoregula boonei (strain DSM 21154 / JCM 14090 / 6A8) protein is Large ribosomal subunit protein uL5.